The sequence spans 5538 residues: Leashin (5538 aa).

Gly residues predominate over residues 1–10; the sequence is MFRALMGGGR. Disordered regions lie at residues 1 to 270, 286 to 315, 331 to 365, 510 to 555, 596 to 712, 800 to 901, 913 to 944, 1027 to 1145, 1164 to 1297, 1310 to 1398, 1432 to 1993, 2067 to 2146, 2165 to 2207, 2233 to 3065, 3077 to 3894, 3910 to 4034, 4072 to 4128, 4238 to 4421, 4442 to 4463, 4509 to 4698, 4733 to 4850, and 4910 to 5052; these read MFRA…SSMG, EVDP…TFGI, LPLP…PHTH, SRDA…KKSS, TESV…DISQ, AATS…FPTG, ALAS…PVPT, NRPH…KDSF, VLSG…GYRD, PTPP…RYVS, EDPT…TSVE, SELL…VNAF, NRLS…SPPA, PEAA…SQPI, MAEE…EIVS, EEKA…DTGL, KFKQ…EEPL, EAAL…SNQA, PRPL…DEND, LRRQ…TSNT, KTDG…VEQA, and ALTV…RHRR. The tract at residues 1–1100 is woronin bodies-binding region; that stretch reads MFRALMGGGR…RASGVQLIDR (1100 aa). The segment covering 14 to 23 has biased composition (low complexity); the sequence is SRSTTSSSKS. Basic and acidic residues-rich tracts occupy residues 42–51 and 89–167; these read SRGDDRDRGL and VEHD…ERSR. Residues 299 to 313 are compositionally biased toward polar residues; it reads AGTTSEPPKPSNTTF. The span at 334-352 shows a compositional bias: pro residues; that stretch reads PASPTSPPEPVPTTAPYAP. The span at 514-523 shows a compositional bias: basic residues; that stretch reads PRKHHYRQRR. A compositionally biased stretch (polar residues) spans 598–607; it reads SVSTARRSQT. A compositionally biased stretch (basic residues) spans 639–655; the sequence is HRSRSRSHSSSRNRRHS. The span at 660–674 shows a compositional bias: low complexity; that stretch reads AAVGAAVGSGAIALA. The segment covering 682 to 698 has biased composition (basic residues); the sequence is SRSRSRSRFPRKSKGRK. Positions 809 to 825 are enriched in basic and acidic residues; that stretch reads RAGEILVAKETRSRHSD. Composition is skewed to low complexity over residues 842 to 851 and 862 to 880; these read GDQSSSSVSS and GSDE…GWRW. A compositionally biased stretch (basic residues) spans 881 to 891; it reads GSKKNKKKKRA. Composition is skewed to basic and acidic residues over residues 1068-1091, 1098-1145, 1178-1198, 1207-1226, 1356-1365, 1375-1387, 1447-1462, and 1478-1488; these read LTKE…DAER, IDRD…KDSF, SQRR…RGSE, SKSE…RQPE, WGEHKTHEYE, SVDH…REQP, GRVE…ESKS, and EEKAPSSRVIE. Low complexity predominate over residues 1506–1516; it reads QESSEPQTRTS. Composition is skewed to basic and acidic residues over residues 1521–1536, 1549–1559, and 1572–1594; these read VIDR…DGSR, GKERDESELRA, and EELR…DRRS. The span at 1639–1648 shows a compositional bias: basic residues; the sequence is KKKRRKRRSK. Basic and acidic residues-rich tracts occupy residues 1672-1686, 1700-1773, and 1788-1800; these read EKLK…EKKA, EPVD…QRRE, and KSGE…KLSE. Composition is skewed to low complexity over residues 1867–1876 and 1889–1898; these read PAPRSRSRPA and SQSSRRSSIL. A compositionally biased stretch (basic and acidic residues) spans 1950-1975; it reads KNSREMRPLWLVERHGPGHGEHKLEE. Composition is skewed to polar residues over residues 1984–1993 and 2121–2130; these read KTSSANTSVE and TPQNNVTAAS. Basic and acidic residues-rich tracts occupy residues 2187–2196, 2269–2279, and 2307–2320; these read DADRTHKPIA, VPRDDKRRDSV, and GENK…KNEN. Positions 2321 to 2331 are enriched in polar residues; it reads ANDNSQAQTEQ. The span at 2344-2355 shows a compositional bias: basic residues; sequence AKKKKKKNKKKR. The span at 2358–2370 shows a compositional bias: polar residues; sequence MDSNTQEPTTPVD. Basic and acidic residues predominate over residues 2427–2441; that stretch reads DVEKAIEAPDVRKEL. The span at 2449 to 2461 shows a compositional bias: low complexity; sequence APEDTPAEPTAET. Residues 2473–2484 are compositionally biased toward basic residues; that stretch reads KKSKKKKKKKNK. Residues 2494–2525 show a composition bias toward polar residues; it reads DPASTETPEASAANSQVVAAEQVESTLETTQP. 3 stretches are compositionally biased toward basic and acidic residues: residues 2580 to 2590, 2647 to 2661, and 2677 to 2691; these read NQAKELPHPEE, PEDK…DLKS, and ALDK…RPAE. A compositionally biased stretch (low complexity) spans 2719–2734; sequence EEPTPTAAELETPLSR. Basic residues predominate over residues 2735–2747; that stretch reads KNSKKNKKKNKRK. A compositionally biased stretch (basic and acidic residues) spans 2796 to 2812; the sequence is DENKGESRDVQAVKEET. Residues 2874–2884 are compositionally biased toward basic residues; it reads KKKAKKKKNRK. A compositionally biased stretch (polar residues) spans 2885–2894; sequence TANVSESQPE. Composition is skewed to basic residues over residues 3003 to 3013 and 3089 to 3100; these read KKSKKNKKKKQ and KKTKKEKKKKRQ. The span at 3145 to 3172 shows a compositional bias: basic and acidic residues; sequence AIEHAEAAAEHSQEQPNKDVTLHADHSP. The segment covering 3248-3268 has biased composition (low complexity); the sequence is PAMEGGAAAEELVAVEPDVLE. Positions 3293-3303 are enriched in polar residues; sequence ELVNAETTQKT. Residues 3329-3341 are compositionally biased toward basic residues; sequence SKKKDKKKKKKRQ. The segment covering 3347–3367 has biased composition (basic and acidic residues); sequence DEQRSSTKEEPTAEFSSDHVP. Composition is skewed to low complexity over residues 3397–3409 and 3422–3435; these read TQTA…SSAS and ESTQ…AQTA. Over residues 3436-3450 the composition is skewed to basic residues; that stretch reads KSKKKAKKDKKKRKS. Residues 3480-3495 show a composition bias toward basic and acidic residues; that stretch reads EGPKPGDKPTSPKDSS. The segment covering 3547-3564 has biased composition (low complexity); it reads EEQAVVEETVAPPVVDEA. 2 stretches are compositionally biased toward polar residues: residues 3565–3580 and 3604–3613; these read SQLQ…LWSE and VSPSLENNEG. Composition is skewed to basic residues over residues 3642 to 3652 and 3716 to 3730; these read KSKKNKKKKKR and KAKK…KRQS. The span at 3768–3787 shows a compositional bias: polar residues; it reads TFSQETSETISTEAKSSEPS. A compositionally biased stretch (basic and acidic residues) spans 3800–3819; that stretch reads KENQSHDTEPHGGNDKDLTW. The segment covering 3823–3837 has biased composition (polar residues); that stretch reads MVSSQVEQQQGTPSD. Residues 3876–3893 show a composition bias toward basic and acidic residues; it reads DRLERSGEEGTRVKKEIV. Polar residues-rich tracts occupy residues 3915–3925 and 3965–3980; these read ISSQGEDTIQV and KDQF…SQSK. Residues 4010–4020 are compositionally biased toward acidic residues; the sequence is TSQDDSVDAVQ. Basic and acidic residues predominate over residues 4111–4123; it reads ESRENKFKEKQLA. The span at 4244-4255 shows a compositional bias: basic residues; it reads KNSKKKSKKAKK. Residues 4328 to 4345 are compositionally biased toward polar residues; it reads LGQTPNMDNQTDDVQSTE. Basic residues predominate over residues 4378-4391; it reads KLSKKDRRKAKKKS. The span at 4392-4406 shows a compositional bias: basic and acidic residues; the sequence is AKDAIEPSDEPELRN. Residues 4495–5538 form a septal pore-binding region region; it reads AIAEFDETAI…SSTMDISNVI (1044 aa). Polar residues predominate over residues 4554-4570; the sequence is TEQSAGLQAKSVSSQGA. 2 stretches are compositionally biased toward basic and acidic residues: residues 4574 to 4591 and 4660 to 4673; these read IQDD…DQTK and EESH…EKGP. Positions 4940 to 4954 are enriched in low complexity; the sequence is SSVSSVKSVQSTHSV. Residues 4966 to 4988 show a composition bias toward polar residues; that stretch reads RNTSGDLRAASQAQESHGTQPHA. Over residues 4989-4998 the composition is skewed to pro residues; it reads TPQPPQPPPS. Residues 5050 to 5223 adopt a coiled-coil conformation; that stretch reads HRRSMQHLQE…QQQIAASLHD (174 aa).

In terms of assembly, binds directly or indirectly to the Woronin body major protein hexA.

The protein localises to the cell septum. Functionally, acts as the tether and is essential for anchoring of Woronin bodies at the septal pore. In damaged hyphae, Woronin bodies occlude septal pores in order to separate intact from damaged compartments. This Aspergillus fumigatus (strain ATCC MYA-4609 / CBS 101355 / FGSC A1100 / Af293) (Neosartorya fumigata) protein is Leashin.